Reading from the N-terminus, the 680-residue chain is Harmonin-binding protein USHBP1 (680 aa).

The segment covering 1 to 15 (MSARATRPRSRRGRH) has biased composition (basic residues). 3 disordered regions span residues 1–101 (MSAR…GPAE), 135–162 (PVEA…GQQE), and 217–250 (ASPP…DSPM). Residues 76-86 (PEERREPEVEA) are compositionally biased toward basic and acidic residues. Coiled coils occupy residues 177–219 (LGTR…EASP), 362–386 (ATNG…VAMD), and 479–506 (LADL…LRAQ). The segment at 524–562 (LMGDGSSGGSSEDPSSEEEAGEDRQQHYQGPPALLGGQM) is disordered. A coiled-coil region spans residues 573–661 (QELSASLTRA…QQAEELAVLT (89 aa)).

The protein belongs to the MCC family. Interacts via its C-terminus with the first PDZ domain of USH1C.

In Rattus norvegicus (Rat), this protein is Harmonin-binding protein USHBP1.